The primary structure comprises 451 residues: Coproporphyrinogen III oxidase (451 aa).

FAD is bound by residues 10-15, 36-37, 58-61, V242, W393, and 429-431; these read GGGISG, DP, GAEA, and IGV.

It belongs to the protoporphyrinogen/coproporphyrinogen oxidase family. Coproporphyrinogen III oxidase subfamily. The cofactor is FAD.

It is found in the cytoplasm. The enzyme catalyses coproporphyrinogen III + 3 O2 = coproporphyrin III + 3 H2O2. The protein operates within porphyrin-containing compound metabolism; protoheme biosynthesis. Functionally, involved in coproporphyrin-dependent heme b biosynthesis. Catalyzes the oxidation of coproporphyrinogen III to coproporphyrin III. The chain is Coproporphyrinogen III oxidase from Mycobacterium leprae (strain TN).